Here is a 256-residue protein sequence, read N- to C-terminus: DNA repair protein RecO (256 aa).

This sequence belongs to the RecO family.

Functionally, involved in DNA repair and RecF pathway recombination. The sequence is that of DNA repair protein RecO from Bacillus pumilus (strain SAFR-032).